Reading from the N-terminus, the 90-residue chain is Acylphosphatase (90 aa).

The Acylphosphatase-like domain occupies 5–90 (SFVVRVWGLV…PPKGSGFHTN (86 aa)). Residues R20 and N38 contribute to the active site.

This sequence belongs to the acylphosphatase family.

It catalyses the reaction an acyl phosphate + H2O = a carboxylate + phosphate + H(+). In Aeromonas hydrophila subsp. hydrophila (strain ATCC 7966 / DSM 30187 / BCRC 13018 / CCUG 14551 / JCM 1027 / KCTC 2358 / NCIMB 9240 / NCTC 8049), this protein is Acylphosphatase (acyP).